We begin with the raw amino-acid sequence, 93 residues long: YcgL domain-containing protein KPN78578_22820 (93 aa).

In terms of domain architecture, YcgL spans methionine 1–leucine 85.

This is YcgL domain-containing protein KPN78578_22820 from Klebsiella pneumoniae subsp. pneumoniae (strain ATCC 700721 / MGH 78578).